The following is a 277-amino-acid chain: 5'-nucleotidase SurE (277 aa).

A divalent metal cation contacts are provided by D16, D17, S48, and N101.

It belongs to the SurE nucleotidase family. A divalent metal cation serves as cofactor.

It localises to the cytoplasm. The enzyme catalyses a ribonucleoside 5'-phosphate + H2O = a ribonucleoside + phosphate. Functionally, nucleotidase that shows phosphatase activity on nucleoside 5'-monophosphates. This Parvibaculum lavamentivorans (strain DS-1 / DSM 13023 / NCIMB 13966) protein is 5'-nucleotidase SurE.